Here is a 504-residue protein sequence, read N- to C-terminus: Glycerol kinase (504 aa).

Threonine 12 lines the ADP pocket. Positions 12, 13, and 14 each coordinate ATP. Threonine 12 provides a ligand contact to sn-glycerol 3-phosphate. Arginine 16 is a binding site for ADP. Sn-glycerol 3-phosphate-binding residues include arginine 82, glutamate 83, tyrosine 134, and aspartate 249. Glycerol is bound by residues arginine 82, glutamate 83, tyrosine 134, aspartate 249, and glutamine 250. ADP contacts are provided by threonine 271 and glycine 315. ATP-binding residues include threonine 271, glycine 315, glutamine 319, and glycine 416. ADP contacts are provided by glycine 416 and asparagine 420.

The protein belongs to the FGGY kinase family.

The enzyme catalyses glycerol + ATP = sn-glycerol 3-phosphate + ADP + H(+). The protein operates within polyol metabolism; glycerol degradation via glycerol kinase pathway; sn-glycerol 3-phosphate from glycerol: step 1/1. With respect to regulation, inhibited by fructose 1,6-bisphosphate (FBP). Functionally, key enzyme in the regulation of glycerol uptake and metabolism. Catalyzes the phosphorylation of glycerol to yield sn-glycerol 3-phosphate. This Mycobacteroides abscessus (strain ATCC 19977 / DSM 44196 / CCUG 20993 / CIP 104536 / JCM 13569 / NCTC 13031 / TMC 1543 / L948) (Mycobacterium abscessus) protein is Glycerol kinase.